Here is a 258-residue protein sequence, read N- to C-terminus: Small ribosomal subunit protein mS23 (258 aa).

This sequence belongs to the mitochondrion-specific ribosomal protein mS23 family. In terms of assembly, component of the mitochondrial small ribosomal subunit.

Its subcellular location is the mitochondrion. The protein is Small ribosomal subunit protein mS23 of Aspergillus fumigatus (strain CBS 144.89 / FGSC A1163 / CEA10) (Neosartorya fumigata).